Here is a 585-residue protein sequence, read N- to C-terminus: Arginine--tRNA ligase (585 aa).

Residues 130–140 carry the 'HIGH' region motif; that stretch reads ANPTGPMHVGH.

The protein belongs to the class-I aminoacyl-tRNA synthetase family. As to quaternary structure, monomer.

It is found in the cytoplasm. It carries out the reaction tRNA(Arg) + L-arginine + ATP = L-arginyl-tRNA(Arg) + AMP + diphosphate. The chain is Arginine--tRNA ligase from Methylorubrum extorquens (strain PA1) (Methylobacterium extorquens).